The chain runs to 184 residues: Large ribosomal subunit protein uL5 (184 aa).

The protein belongs to the universal ribosomal protein uL5 family. As to quaternary structure, part of the 50S ribosomal subunit; part of the 5S rRNA/L5/L18/L25 subcomplex. Contacts the 5S rRNA and the P site tRNA. Forms a bridge to the 30S subunit in the 70S ribosome.

This is one of the proteins that bind and probably mediate the attachment of the 5S RNA into the large ribosomal subunit, where it forms part of the central protuberance. In the 70S ribosome it contacts protein S13 of the 30S subunit (bridge B1b), connecting the 2 subunits; this bridge is implicated in subunit movement. Contacts the P site tRNA; the 5S rRNA and some of its associated proteins might help stabilize positioning of ribosome-bound tRNAs. This is Large ribosomal subunit protein uL5 from Ureaplasma urealyticum serovar 10 (strain ATCC 33699 / Western).